A 231-amino-acid chain; its full sequence is Orotidine 5'-phosphate decarboxylase (231 aa).

Substrate-binding positions include Asp-11, Lys-33, 60 to 69 (DLKFHDIPNT), Thr-117, Arg-178, Gln-187, Gly-207, and Arg-208. Lys-62 functions as the Proton donor in the catalytic mechanism.

This sequence belongs to the OMP decarboxylase family. Type 1 subfamily. In terms of assembly, homodimer.

It catalyses the reaction orotidine 5'-phosphate + H(+) = UMP + CO2. It functions in the pathway pyrimidine metabolism; UMP biosynthesis via de novo pathway; UMP from orotate: step 2/2. In terms of biological role, catalyzes the decarboxylation of orotidine 5'-monophosphate (OMP) to uridine 5'-monophosphate (UMP). This is Orotidine 5'-phosphate decarboxylase from Nitrosomonas europaea (strain ATCC 19718 / CIP 103999 / KCTC 2705 / NBRC 14298).